A 672-amino-acid polypeptide reads, in one-letter code: F(420)H(2) dehydrogenase subunit L (672 aa).

16 helical membrane-spanning segments follow: residues 8-28 (EFAFLIPLLPALAFAITFFFG), 37-57 (IVPILAIAASFVISFAITLGL), 79-99 (ILIDPLAAVMLSMVSFVSLLI), 136-156 (ILQLFVSWELVGLCSYLLIGF), 179-199 (VMFLTGIIVLTSDLLKVSGGF), 225-245 (ILGFEISHLTIITLLFFGGAV), 265-285 (TTVSALIHAATMVTAGVYLVA), 298-318 (LMVVAYFGGFTALFAGTMGIV), 337-357 (MMLGLGLGTAIGLEAVGISLF), 360-380 (INHAFFKALLFLCAGSVIHAV), 394-414 (VMPITAATMTIAALALAGFGI), 447-467 (YVFSILAALLTSIYIFRLIFM), 483-503 (PAIMTIPLSILAIFALAFGAL), 545-565 (LAVLWPPVIVALAGFAIAFVI), 601-621 (FSIGIVYGIIAFLTQVVDVII), and 652-672 (TALIAGVSLLIILVKLIMEVL).

This sequence belongs to the complex I subunit 5 family. The FPO complex is composed of at least 13 different subunits. FpoA, FpoH, FpoJ, FpoK, FpoL, FpoM and FpoN proteins constitute the membrane sector of the complex.

It is found in the cell membrane. The enzyme catalyses methanophenazine + reduced coenzyme F420-(gamma-L-Glu)(n) = dihydromethanophenazine + oxidized coenzyme F420-(gamma-L-Glu)(n) + H(+). Component of the F(420)H(2) dehydrogenase (FPO complex) which is part of the energy-conserving F(420)H(2):heterodisulfide oxidoreductase system. The membrane-bound electron transfer system of the complex plays an important role in the metabolism of methylotrophic methanogens when the organisms grow on methanol or methylamines. Catalyzes the oxidation of methanophenazine to dihydromethanophenazine. It shuttles electrons from F(420)H(2), via FAD and iron-sulfur (Fe-S) centers, to methanophenazine (an electron carrier in the membrane). It couples the redox reaction to proton translocation (for every two electrons transferred, two hydrogen ions are translocated across the cytoplasmic membrane), and thus conserves the redox energy in a proton gradient. It also catalyzes the oxidation of F(420)H(2) with quinones such as 2,3-dimethyl-1,4-naphthoquinone, 2-methyl-1,4-naphthoquinone and tetramethyl-p-benzoquinone. This chain is F(420)H(2) dehydrogenase subunit L (fpoL), found in Methanosarcina mazei (strain ATCC BAA-159 / DSM 3647 / Goe1 / Go1 / JCM 11833 / OCM 88) (Methanosarcina frisia).